The chain runs to 224 residues: Orotate phosphoribosyltransferase (224 aa).

Residues lysine 26, 73-74 (YK), arginine 100, lysine 101, lysine 104, histidine 106, and 127-135 (EDVTTSGKS) each bind 5-phospho-alpha-D-ribose 1-diphosphate. Residues threonine 131 and arginine 160 each contribute to the orotate site.

The protein belongs to the purine/pyrimidine phosphoribosyltransferase family. PyrE subfamily. As to quaternary structure, homodimer. Mg(2+) serves as cofactor.

It catalyses the reaction orotidine 5'-phosphate + diphosphate = orotate + 5-phospho-alpha-D-ribose 1-diphosphate. It functions in the pathway pyrimidine metabolism; UMP biosynthesis via de novo pathway; UMP from orotate: step 1/2. Its function is as follows. Catalyzes the transfer of a ribosyl phosphate group from 5-phosphoribose 1-diphosphate to orotate, leading to the formation of orotidine monophosphate (OMP). This Clostridium botulinum (strain Alaska E43 / Type E3) protein is Orotate phosphoribosyltransferase.